Reading from the N-terminus, the 464-residue chain is MEDLDALWERYREAVRAGGNPQALYQEMVWPALLALWREKPRVYPFPQAFAVSVHTLGTSPEATALAILGAGAERVYVLHTPESARFLPRLRQDTGKDLYPVEIGKSDVEAIYREVKRLLEKHPEVPVALDLTSGTKAMSAGLAAAGFFFQRFYPKVRVVYVDNEDYDPELRRPRAGTEKLRILPNPHEALAEVDALFAKELYGKGEFGQAAAYFRGMVGRTGNQAYALYALLAEMYRAWRALDFGEALKAGRKLLGQLSQNVWLNHPLNARREALEAQVALLEAVDRFLKARDFALKEGVYGLARTLLHLAQEAKEEAAVLAALYAYRALELLLQERLALLGRRAEAPGLSPEEAEALRKALAELLGVLPEEVRLPAKLGLLDLLAFLRLKGDEALGRLSLAELRGLAGALKGRNSALLVHGFDVPSPKAVEGIARLAQGLLQDLEARTALGPLSPEPVPLGF.

The segment at 1-190 is CARF domain; that stretch reads MEDLDALWER…LRILPNPHEA (190 aa). The tract at residues 191-464 is HEPN domain; that stretch reads LAEVDALFAK…LSPEPVPLGF (274 aa).

Belongs to the CRISPR-associated Csm6 family. As to quaternary structure, homodimer. The protein forms a twisted, head-to-head dimer; the composite ssRNase active site is formed at the dimer interface. The cofactor is Does not require a metal cofactor..

Non-specific ssRNase activity is allosterically activated about 1000-fold by cyclic tetraadenylate (cA4), which probably binds to its CARF domain. Functionally, CRISPR (clustered regularly interspaced short palindromic repeat) is an adaptive immune system that provides protection against mobile genetic elements (viruses, transposable elements and conjugative plasmids). CRISPR clusters contain spacers, sequences complementary to antecedent mobile elements, and target invading nucleic acids. CRISPR clusters are transcribed and processed into CRISPR RNA (crRNA). The type III-A Csm effector complex binds crRNA and acts as a crRNA-guided RNase, DNase and cyclic oligoadenylate synthase; binding of target RNA cognate to the crRNA is required for all activities. This protein is not part of the Csm effector complex. Its function is as follows. A single-strand-specific endoribonuclease (ssRNase) producing free 5'-OH. Activity is approximately 1000-fold stimulated by cyclic oligoadenylate (cOA); only cyclic tetraadenylate (cA4) stimulates the ssRNase activity while linear oligoadenylates do not activate the RNase. Another study showed stimulation by linear tetraadenylate at very high concentrations, but did not examine stimulation by cA4. The polypeptide is CRISPR system endoribonuclease Csm6 (Thermus thermophilus (strain ATCC 27634 / DSM 579 / HB8)).